Consider the following 200-residue polypeptide: MGNLFGRKRRSRVTEQDKAVLQLKQQRDKLRQYQKRISLGLERERELARQLLKEGKKEKAMLLLKKKRYQEQLLDKTDNQISNLERMVQDIEFTQIEMKVIEGLKIGNECLNKMHQVMSIEEVERIIGETQDAVEYQRQIDEILAGSLTEEDEDAILEELNAITQEQLELPDVPSEPLPEEPPEATPVKNRPKPELVAAS.

Residue Gly2 is the site of N-myristoyl glycine attachment. Positions 10-94 (RSRVTEQDKA…ERMVQDIEFT (85 aa)) form a coiled coil. Positions 168 to 179 (LELPDVPSEPLP) match the Type-2 MIT-interacting motif motif. Residues 169 to 200 (ELPDVPSEPLPEEPPEATPVKNRPKPELVAAS) form a disordered region.

The protein belongs to the SNF7 family. In terms of assembly, probable core component of the endosomal sorting required for transport complex III (ESCRT-III). ESCRT-III components are thought to multimerize to form a flat lattice on the perimeter membrane of the endosome.

Its subcellular location is the endomembrane system. The protein localises to the late endosome membrane. Probable core component of the endosomal sorting required for transport complex III (ESCRT-III) which is involved in multivesicular bodies (MVBs) formation and sorting of endosomal cargo proteins into MVBs. MVBs contain intraluminal vesicles (ILVs) that are generated by invagination and scission from the limiting membrane of the endosome and mostly are delivered to lysosomes enabling degradation of membrane proteins, such as stimulated growth factor receptors, lysosomal enzymes and lipids. In the ESCRT-III complex, it probably serves as an acceptor for the ESCRT-II complex on endosomal membranes. This chain is Charged multivesicular body protein 6 (CHMP6), found in Gallus gallus (Chicken).